We begin with the raw amino-acid sequence, 242 residues long: 3-deoxy-manno-octulosonate cytidylyltransferase (242 aa).

The protein belongs to the KdsB family.

The protein resides in the cytoplasm. It carries out the reaction 3-deoxy-alpha-D-manno-oct-2-ulosonate + CTP = CMP-3-deoxy-beta-D-manno-octulosonate + diphosphate. It participates in nucleotide-sugar biosynthesis; CMP-3-deoxy-D-manno-octulosonate biosynthesis; CMP-3-deoxy-D-manno-octulosonate from 3-deoxy-D-manno-octulosonate and CTP: step 1/1. It functions in the pathway bacterial outer membrane biogenesis; lipopolysaccharide biosynthesis. Activates KDO (a required 8-carbon sugar) for incorporation into bacterial lipopolysaccharide in Gram-negative bacteria. This Anaeromyxobacter dehalogenans (strain 2CP-C) protein is 3-deoxy-manno-octulosonate cytidylyltransferase.